A 136-amino-acid chain; its full sequence is Nucleoside diphosphate kinase (136 aa).

ATP is bound by residues Lys10, Phe58, Arg86, Thr92, Arg104, and Asn114. Residue His117 is the Pros-phosphohistidine intermediate of the active site.

Belongs to the NDK family. In terms of assembly, homotetramer. Requires Mg(2+) as cofactor.

The protein resides in the cytoplasm. The catalysed reaction is a 2'-deoxyribonucleoside 5'-diphosphate + ATP = a 2'-deoxyribonucleoside 5'-triphosphate + ADP. The enzyme catalyses a ribonucleoside 5'-diphosphate + ATP = a ribonucleoside 5'-triphosphate + ADP. Its function is as follows. Major role in the synthesis of nucleoside triphosphates other than ATP. The ATP gamma phosphate is transferred to the NDP beta phosphate via a ping-pong mechanism, using a phosphorylated active-site intermediate. The polypeptide is Nucleoside diphosphate kinase (Mycolicibacterium paratuberculosis (strain ATCC BAA-968 / K-10) (Mycobacterium paratuberculosis)).